Reading from the N-terminus, the 899-residue chain is Translation initiation factor IF-2 (899 aa).

Disordered stretches follow at residues 115 to 137 (EAKARAEQQAREAAEQKARLQTE), 170 to 189 (RGGGTVKPAPKPAETLEQKK), and 262 to 309 (DREI…HGFE). Positions 399 to 568 (TRPPVVTIMG…LIQSELMELK (170 aa)) constitute a tr-type G domain. The tract at residues 408–415 (GHVDHGKT) is G1. A GTP-binding site is contributed by 408–415 (GHVDHGKT). Positions 433 to 437 (GITQH) are G2. The interval 454–457 (DTPG) is G3. GTP is bound by residues 454 to 458 (DTPGH) and 508 to 511 (NKMD). Positions 508–511 (NKMD) are G4. A G5 region spans residues 544–546 (SAH).

It belongs to the TRAFAC class translation factor GTPase superfamily. Classic translation factor GTPase family. IF-2 subfamily.

The protein localises to the cytoplasm. One of the essential components for the initiation of protein synthesis. Protects formylmethionyl-tRNA from spontaneous hydrolysis and promotes its binding to the 30S ribosomal subunits. Also involved in the hydrolysis of GTP during the formation of the 70S ribosomal complex. This Acinetobacter baumannii (strain SDF) protein is Translation initiation factor IF-2.